A 179-amino-acid chain; its full sequence is Large ribosomal subunit protein uL5 (179 aa).

It belongs to the universal ribosomal protein uL5 family. As to quaternary structure, part of the 50S ribosomal subunit; part of the 5S rRNA/L5/L18/L25 subcomplex. Contacts the 5S rRNA and the P site tRNA. Forms a bridge to the 30S subunit in the 70S ribosome.

This is one of the proteins that bind and probably mediate the attachment of the 5S RNA into the large ribosomal subunit, where it forms part of the central protuberance. In the 70S ribosome it contacts protein S13 of the 30S subunit (bridge B1b), connecting the 2 subunits; this bridge is implicated in subunit movement. Contacts the P site tRNA; the 5S rRNA and some of its associated proteins might help stabilize positioning of ribosome-bound tRNAs. The chain is Large ribosomal subunit protein uL5 from Deinococcus geothermalis (strain DSM 11300 / CIP 105573 / AG-3a).